We begin with the raw amino-acid sequence, 186 residues long: Adenylyl-sulfate kinase (186 aa).

17–24 is a binding site for ATP; it reads GLSGAGKT. The Phosphoserine intermediate role is filled by Ser-91.

The protein belongs to the APS kinase family.

It catalyses the reaction adenosine 5'-phosphosulfate + ATP = 3'-phosphoadenylyl sulfate + ADP + H(+). The protein operates within sulfur metabolism; hydrogen sulfide biosynthesis; sulfite from sulfate: step 2/3. Its function is as follows. Catalyzes the synthesis of activated sulfate. The protein is Adenylyl-sulfate kinase of Chloroflexus aurantiacus (strain ATCC 29364 / DSM 637 / Y-400-fl).